The following is a 441-amino-acid chain: 3-phosphoshikimate 1-carboxyvinyltransferase (441 aa).

The disordered stretch occupies residues 1-24 (MSGTGQSDDPRELKAGGSLQGRVK). 3-phosphoshikimate contacts are provided by Lys-29, Ser-30, and Arg-34. A phosphoenolpyruvate-binding site is contributed by Lys-29. Phosphoenolpyruvate-binding residues include Gly-103 and Arg-132. Residues Ser-177, Gln-179, Asp-328, and Lys-355 each coordinate 3-phosphoshikimate. Residue Gln-179 coordinates phosphoenolpyruvate. Asp-328 functions as the Proton acceptor in the catalytic mechanism. 2 residues coordinate phosphoenolpyruvate: Arg-359 and Arg-401.

This sequence belongs to the EPSP synthase family. As to quaternary structure, monomer.

The protein resides in the cytoplasm. It catalyses the reaction 3-phosphoshikimate + phosphoenolpyruvate = 5-O-(1-carboxyvinyl)-3-phosphoshikimate + phosphate. It participates in metabolic intermediate biosynthesis; chorismate biosynthesis; chorismate from D-erythrose 4-phosphate and phosphoenolpyruvate: step 6/7. Catalyzes the transfer of the enolpyruvyl moiety of phosphoenolpyruvate (PEP) to the 5-hydroxyl of shikimate-3-phosphate (S3P) to produce enolpyruvyl shikimate-3-phosphate and inorganic phosphate. The polypeptide is 3-phosphoshikimate 1-carboxyvinyltransferase (Synechococcus sp. (strain CC9605)).